A 106-amino-acid chain; its full sequence is Biogenesis of lysosome-related organelles complex 1 subunit 6 (106 aa).

The interval 78 to 106 (KKTSQLELSDTNIEDGSTTSTPTTTNKSQ) is disordered. A compositionally biased stretch (polar residues) spans 82 to 93 (QLELSDTNIEDG). A compositionally biased stretch (low complexity) spans 94–106 (STTSTPTTTNKSQ).

Belongs to the BLOC1S6 family. Homodimer (isoform 1). Component of the biogenesis of lysosome-related organelles complex-1 (BLOC-1) composed at least of blos-1, blos-2, blos-4, dsbn-1, glo-2, mutd-1 and snpn-1. Isoform 1 interacts with blos-1 and blos-4.

It localises to the cytoplasm. It is found in the endosome. Functionally, component of the biogenesis of lysosome-related organelles complex-1 (BLOC-1) involved in gut granule biogenesis. The sequence is that of Biogenesis of lysosome-related organelles complex 1 subunit 6 (glo-2) from Caenorhabditis elegans.